Reading from the N-terminus, the 185-residue chain is Ribosome-recycling factor (185 aa).

This sequence belongs to the RRF family.

The protein resides in the cytoplasm. In terms of biological role, responsible for the release of ribosomes from messenger RNA at the termination of protein biosynthesis. May increase the efficiency of translation by recycling ribosomes from one round of translation to another. This chain is Ribosome-recycling factor, found in Yersinia pseudotuberculosis serotype O:1b (strain IP 31758).